The primary structure comprises 352 residues: Small ribosomal subunit biogenesis GTPase RsgA 1 (352 aa).

The interval 1-24 (MAKKKKLTQGQVRRVRDNQQKRLK) is disordered. A CP-type G domain is found at 104–272 (TSVLTRPDYY…LIDSPGVREF (169 aa)). GTP contacts are provided by residues 160–163 (NKID) and 214–222 (GQSGVGKSS). Zn(2+) contacts are provided by C296, C301, H303, and C309.

The protein belongs to the TRAFAC class YlqF/YawG GTPase family. RsgA subfamily. As to quaternary structure, monomer. Associates with 30S ribosomal subunit, binds 16S rRNA. It depends on Zn(2+) as a cofactor.

It is found in the cytoplasm. One of several proteins that assist in the late maturation steps of the functional core of the 30S ribosomal subunit. Helps release RbfA from mature subunits. May play a role in the assembly of ribosomal proteins into the subunit. Circularly permuted GTPase that catalyzes slow GTP hydrolysis, GTPase activity is stimulated by the 30S ribosomal subunit. In Vibrio vulnificus (strain CMCP6), this protein is Small ribosomal subunit biogenesis GTPase RsgA 1.